We begin with the raw amino-acid sequence, 670 residues long: Probable plastid-lipid-associated protein 14, chloroplastic (670 aa).

The N-terminal 52 residues, 1–52 (MALCGVCSTPNLPNLQVFRSVRNSSIGYKRNHSLWQLRSSSFRAKSVIFHCS), are a transit peptide targeting the chloroplast. In terms of domain architecture, Protein kinase spans 88-399 (FRILDRVSIG…CLDALKHPFL (312 aa)).

Belongs to the PAP/fibrillin family. Not autophosphorylated. As to expression, expressed in roots.

It localises to the plastid. The protein resides in the chloroplast. Functionally, directly regulated by DOF3.6/OBP3; unknown function. This chain is Probable plastid-lipid-associated protein 14, chloroplastic (PAP14), found in Arabidopsis thaliana (Mouse-ear cress).